A 396-amino-acid polypeptide reads, in one-letter code: NADH-quinone oxidoreductase subunit D (396 aa).

The protein belongs to the complex I 49 kDa subunit family. As to quaternary structure, NDH-1 is composed of 14 different subunits. Subunits NuoB, C, D, E, F, and G constitute the peripheral sector of the complex.

It is found in the cell inner membrane. The catalysed reaction is a quinone + NADH + 5 H(+)(in) = a quinol + NAD(+) + 4 H(+)(out). Functionally, NDH-1 shuttles electrons from NADH, via FMN and iron-sulfur (Fe-S) centers, to quinones in the respiratory chain. The immediate electron acceptor for the enzyme in this species is believed to be ubiquinone. Couples the redox reaction to proton translocation (for every two electrons transferred, four hydrogen ions are translocated across the cytoplasmic membrane), and thus conserves the redox energy in a proton gradient. This chain is NADH-quinone oxidoreductase subunit D, found in Rhodopseudomonas palustris (strain BisB18).